The primary structure comprises 292 residues: Ventral anterior homeobox 2 (292 aa).

The span at 1-36 (MGDGGAERDRGPKRREEPGGRSGRHGEHRGAEDLRA) shows a compositional bias: basic and acidic residues. Positions 1–74 (MGDGGAERDR…DGQQALGETD (74 aa)) are disordered. A DNA-binding region (homeobox) is located at residues 102–161 (PKRTRTSFTAEQLYRLEMEFQRCQYVVGRERTELARQLNLSETQVKVWFQNRRTKQKKDQ). Residues 207-242 (LPGLPASHRGTSLVDPRNSSPRLNPMPSASASSPLP) are disordered.

Belongs to the EMX homeobox family. As to expression, expressed in the developing and mature retina.

The protein resides in the nucleus. In terms of biological role, transcription factor that may function in dorsoventral specification of the forebrain. Regulates the expression of Wnt signaling antagonists including the expression of a truncated TCF7L2 isoform that cannot bind CTNNB1 and acts therefore as a potent dominant-negative Wnt antagonist. Plays a crucial role in eye development and, in particular, in the specification of the ventral optic vesicle. May be a regulator of axial polarization in the retina. In Mus musculus (Mouse), this protein is Ventral anterior homeobox 2 (Vax2).